The primary structure comprises 137 residues: Nucleoside diphosphate kinase (137 aa).

ATP contacts are provided by Lys9, Phe57, Arg85, Thr91, Arg102, and Asn112. His115 (pros-phosphohistidine intermediate) is an active-site residue.

The protein belongs to the NDK family. Homotetramer. Requires Mg(2+) as cofactor.

The protein localises to the cytoplasm. It carries out the reaction a 2'-deoxyribonucleoside 5'-diphosphate + ATP = a 2'-deoxyribonucleoside 5'-triphosphate + ADP. The enzyme catalyses a ribonucleoside 5'-diphosphate + ATP = a ribonucleoside 5'-triphosphate + ADP. Its function is as follows. Major role in the synthesis of nucleoside triphosphates other than ATP. The ATP gamma phosphate is transferred to the NDP beta phosphate via a ping-pong mechanism, using a phosphorylated active-site intermediate. The chain is Nucleoside diphosphate kinase from Leptospira biflexa serovar Patoc (strain Patoc 1 / ATCC 23582 / Paris).